We begin with the raw amino-acid sequence, 408 residues long: Innexin-12 (408 aa).

A helical membrane pass occupies residues threonine 29–isoleucine 49. Asparagine 99 carries an N-linked (GlcNAc...) asparagine glycan. A run of 3 helical transmembrane segments spans residues glutamine 113–tryptophan 133, valine 197–valine 217, and isoleucine 284–isoleucine 304.

It belongs to the pannexin family.

It localises to the cell membrane. Its subcellular location is the cell junction. The protein resides in the gap junction. Its function is as follows. Structural component of the gap junctions. Plays a role in oocyte directional transit in the spermatheca during ovulation by facilitating the directional propagation of the calcium signal in the spermatheca. Plays a role in male tail tip morphogenesis. The protein is Innexin-12 of Caenorhabditis elegans.